We begin with the raw amino-acid sequence, 371 residues long: tRNA (guanine(26)-N(2))-dimethyltransferase (371 aa).

Residues 4–368 (VEVTEGRTRF…APLPVLEKVV (365 aa)) form the Trm1 methyltransferase domain. Residues Arg-41, Arg-66, Asp-82, Asp-108, and Ala-109 each coordinate S-adenosyl-L-methionine. Zn(2+) is bound by residues Cys-237, Cys-240, Cys-256, and Cys-259.

Belongs to the class I-like SAM-binding methyltransferase superfamily. Trm1 family.

The enzyme catalyses guanosine(26) in tRNA + 2 S-adenosyl-L-methionine = N(2)-dimethylguanosine(26) in tRNA + 2 S-adenosyl-L-homocysteine + 2 H(+). Its function is as follows. Dimethylates a single guanine residue at position 26 of a number of tRNAs using S-adenosyl-L-methionine as donor of the methyl groups. This chain is tRNA (guanine(26)-N(2))-dimethyltransferase, found in Methanoculleus marisnigri (strain ATCC 35101 / DSM 1498 / JR1).